The following is a 217-amino-acid chain: 3,4-dihydroxy-2-butanone 4-phosphate synthase (217 aa).

Residues 37 to 38 (RE), Asp-42, 150 to 154 (RRGHT), and Glu-174 each bind D-ribulose 5-phosphate. Glu-38 is a binding site for Mg(2+). His-153 contacts Mg(2+).

This sequence belongs to the DHBP synthase family. Homodimer. It depends on Mg(2+) as a cofactor. The cofactor is Mn(2+).

It carries out the reaction D-ribulose 5-phosphate = (2S)-2-hydroxy-3-oxobutyl phosphate + formate + H(+). It functions in the pathway cofactor biosynthesis; riboflavin biosynthesis; 2-hydroxy-3-oxobutyl phosphate from D-ribulose 5-phosphate: step 1/1. In terms of biological role, catalyzes the conversion of D-ribulose 5-phosphate to formate and 3,4-dihydroxy-2-butanone 4-phosphate. The sequence is that of 3,4-dihydroxy-2-butanone 4-phosphate synthase from Shewanella oneidensis (strain ATCC 700550 / JCM 31522 / CIP 106686 / LMG 19005 / NCIMB 14063 / MR-1).